The chain runs to 301 residues: DSC E3 ubiquitin ligase complex subunit B (301 aa).

3 helical membrane-spanning segments follow: residues 9 to 29 (APIT…LSIL), 52 to 72 (LATW…AAML), and 90 to 110 (TFII…LVLL). Low complexity predominate over residues 268 to 284 (AAAAASGNAGSASEASG). A disordered region spans residues 268–301 (AAAAASGNAGSASEASGQRQRRREGGIMDRLRAL). Residues 290–301 (REGGIMDRLRAL) are compositionally biased toward basic and acidic residues.

As to quaternary structure, component of the DSC E3 ubiquitin ligase complex composed of dscA, dscB, dscC and dscD.

The protein resides in the endoplasmic reticulum membrane. The catalysed reaction is S-ubiquitinyl-[E2 ubiquitin-conjugating enzyme]-L-cysteine + [acceptor protein]-L-lysine = [E2 ubiquitin-conjugating enzyme]-L-cysteine + N(6)-ubiquitinyl-[acceptor protein]-L-lysine.. It functions in the pathway protein modification; protein ubiquitination. In terms of biological role, component of the DSC E3 ubiquitin ligase complex which is required for the srbA transcriptional activator proteolytic cleavage to release the soluble transcription factor from the membrane in low oxygen or sterol conditions. Required for growth during hypoxia and triazole drug susceptibility, as well as for virulence in a murine model of invasive pulmonary aspergillosis (IPA). In Aspergillus fumigatus (strain ATCC MYA-4609 / CBS 101355 / FGSC A1100 / Af293) (Neosartorya fumigata), this protein is DSC E3 ubiquitin ligase complex subunit B.